A 234-amino-acid chain; its full sequence is Leucyl/phenylalanyl-tRNA--protein transferase (234 aa).

It belongs to the L/F-transferase family.

It localises to the cytoplasm. The catalysed reaction is N-terminal L-lysyl-[protein] + L-leucyl-tRNA(Leu) = N-terminal L-leucyl-L-lysyl-[protein] + tRNA(Leu) + H(+). It catalyses the reaction N-terminal L-arginyl-[protein] + L-leucyl-tRNA(Leu) = N-terminal L-leucyl-L-arginyl-[protein] + tRNA(Leu) + H(+). It carries out the reaction L-phenylalanyl-tRNA(Phe) + an N-terminal L-alpha-aminoacyl-[protein] = an N-terminal L-phenylalanyl-L-alpha-aminoacyl-[protein] + tRNA(Phe). Functions in the N-end rule pathway of protein degradation where it conjugates Leu, Phe and, less efficiently, Met from aminoacyl-tRNAs to the N-termini of proteins containing an N-terminal arginine or lysine. The chain is Leucyl/phenylalanyl-tRNA--protein transferase from Citrobacter koseri (strain ATCC BAA-895 / CDC 4225-83 / SGSC4696).